The chain runs to 428 residues: 3-phosphoshikimate 1-carboxyvinyltransferase (428 aa).

Positions 23, 24, and 28 each coordinate 3-phosphoshikimate. A phosphoenolpyruvate-binding site is contributed by Lys-23. Phosphoenolpyruvate contacts are provided by Gly-97 and Arg-125. Positions 170, 171, 172, 198, 314, 337, and 341 each coordinate 3-phosphoshikimate. Residue Gln-172 coordinates phosphoenolpyruvate. The active-site Proton acceptor is Asp-314. Phosphoenolpyruvate is bound by residues Arg-345, Arg-387, and Lys-412.

It belongs to the EPSP synthase family. Monomer.

It localises to the cytoplasm. The catalysed reaction is 3-phosphoshikimate + phosphoenolpyruvate = 5-O-(1-carboxyvinyl)-3-phosphoshikimate + phosphate. Its pathway is metabolic intermediate biosynthesis; chorismate biosynthesis; chorismate from D-erythrose 4-phosphate and phosphoenolpyruvate: step 6/7. Its function is as follows. Catalyzes the transfer of the enolpyruvyl moiety of phosphoenolpyruvate (PEP) to the 5-hydroxyl of shikimate-3-phosphate (S3P) to produce enolpyruvyl shikimate-3-phosphate and inorganic phosphate. This Erwinia tasmaniensis (strain DSM 17950 / CFBP 7177 / CIP 109463 / NCPPB 4357 / Et1/99) protein is 3-phosphoshikimate 1-carboxyvinyltransferase.